A 437-amino-acid chain; its full sequence is Serine carboxypeptidase-like 10 (437 aa).

The N-terminal stretch at 1 to 21 (MGSTLKHLLLLLLVLIRHVDS) is a signal peptide. Intrachain disulfides connect Cys80–Cys327, Cys243–Cys257, and Cys281–Cys293. The N-linked (GlcNAc...) asparagine glycan is linked to Asn101. Ser175 is a catalytic residue. N-linked (GlcNAc...) asparagine glycosylation occurs at Asn328. The active site involves Asp362. A glycan (N-linked (GlcNAc...) asparagine) is linked at Asn378. Residue His415 is part of the active site. A glycan (N-linked (GlcNAc...) asparagine) is linked at Asn422.

Belongs to the peptidase S10 family. As to expression, expressed in senescent leaves.

Its subcellular location is the secreted. Functionally, involved in the biosynthesis of sinapoylated anthocyanins. The sequence is that of Serine carboxypeptidase-like 10 (SCPL10) from Arabidopsis thaliana (Mouse-ear cress).